Consider the following 493-residue polypeptide: Glutamyl-tRNA(Gln) amidotransferase subunit A (493 aa).

Active-site charge relay system residues include K79 and S159. S183 serves as the catalytic Acyl-ester intermediate.

Belongs to the amidase family. GatA subfamily. In terms of assembly, heterotrimer of A, B and C subunits.

The enzyme catalyses L-glutamyl-tRNA(Gln) + L-glutamine + ATP + H2O = L-glutaminyl-tRNA(Gln) + L-glutamate + ADP + phosphate + H(+). In terms of biological role, allows the formation of correctly charged Gln-tRNA(Gln) through the transamidation of misacylated Glu-tRNA(Gln) in organisms which lack glutaminyl-tRNA synthetase. The reaction takes place in the presence of glutamine and ATP through an activated gamma-phospho-Glu-tRNA(Gln). This chain is Glutamyl-tRNA(Gln) amidotransferase subunit A, found in Allorhizobium ampelinum (strain ATCC BAA-846 / DSM 112012 / S4) (Agrobacterium vitis (strain S4)).